A 123-amino-acid polypeptide reads, in one-letter code: Small ribosomal subunit protein uS12 (123 aa).

At D89 the chain carries 3-methylthioaspartic acid.

This sequence belongs to the universal ribosomal protein uS12 family. In terms of assembly, part of the 30S ribosomal subunit. Contacts proteins S8 and S17. May interact with IF1 in the 30S initiation complex.

With S4 and S5 plays an important role in translational accuracy. In terms of biological role, interacts with and stabilizes bases of the 16S rRNA that are involved in tRNA selection in the A site and with the mRNA backbone. Located at the interface of the 30S and 50S subunits, it traverses the body of the 30S subunit contacting proteins on the other side and probably holding the rRNA structure together. The combined cluster of proteins S8, S12 and S17 appears to hold together the shoulder and platform of the 30S subunit. This chain is Small ribosomal subunit protein uS12, found in Syntrophus aciditrophicus (strain SB).